The primary structure comprises 122 residues: ATP-dependent Clp protease adapter protein ClpS (122 aa).

This sequence belongs to the ClpS family. Binds to the N-terminal domain of the chaperone ClpA.

Its function is as follows. Involved in the modulation of the specificity of the ClpAP-mediated ATP-dependent protein degradation. The protein is ATP-dependent Clp protease adapter protein ClpS of Pseudomonas fluorescens (strain SBW25).